The chain runs to 264 residues: Complement C1q tumor necrosis factor-related protein 6 (264 aa).

Positions 1-24 are cleaved as a signal peptide; sequence MRVIMGIASLGFLWAVFLLPLVFG. N-linked (GlcNAc...) asparagine glycosylation is present at Asn77. Residues 81-125 are disordered; it reads LKGDKGDRGPTGTPGKPGKNGTRGDRGSQGVKGDKGQAGSPGSSC. The 42-residue stretch at 83–124 folds into the Collagen-like domain; it reads GDKGDRGPTGTPGKPGKNGTRGDRGSQGVKGDKGQAGSPGSS. Low complexity predominate over residues 90–100; sequence PTGTPGKPGKN. One can recognise a C1q domain in the interval 125–264; sequence CQTHYSAFSV…SGHLIKAEDN (140 aa).

It localises to the secreted. This chain is Complement C1q tumor necrosis factor-related protein 6 (C1qtnf6), found in Mus musculus (Mouse).